Consider the following 220-residue polypeptide: Coat protein (220 aa).

Belongs to the potexvirus capsid protein family.

Its subcellular location is the virion. Functionally, required for genome encapsidation. Forms ribonucleoprotein complexes along with TGB1 helicase and viral RNA. The chain is Coat protein from Cattleya (Nun's hood orchid).